The sequence spans 219 residues: Guanylate kinase (219 aa).

Residues 15 to 194 (GLMLVISSPS…AFSSVRAIVE (180 aa)) enclose the Guanylate kinase-like domain. ATP is bound at residue 22–29 (SPSGAGKS).

This sequence belongs to the guanylate kinase family.

The protein resides in the cytoplasm. It carries out the reaction GMP + ATP = GDP + ADP. Essential for recycling GMP and indirectly, cGMP. This is Guanylate kinase from Rhizobium meliloti (strain 1021) (Ensifer meliloti).